The chain runs to 440 residues: GTPase Der (440 aa).

EngA-type G domains are found at residues 4 to 168 (PIVA…NPED) and 177 to 352 (IKVA…NQNA). GTP is bound by residues 10–17 (GRPNVGKS), 57–61 (DTGGI), 120–123 (NKVD), 183–190 (GKPNVGKS), 230–234 (DTAGI), and 295–298 (NKWD). The region spanning 353-437 (MRIPTGALNE…PIRFILREKT (85 aa)) is the KH-like domain.

Belongs to the TRAFAC class TrmE-Era-EngA-EngB-Septin-like GTPase superfamily. EngA (Der) GTPase family. In terms of assembly, associates with the 50S ribosomal subunit.

Its function is as follows. GTPase that plays an essential role in the late steps of ribosome biogenesis. The protein is GTPase Der of Alkaliphilus oremlandii (strain OhILAs) (Clostridium oremlandii (strain OhILAs)).